A 447-amino-acid chain; its full sequence is Phosphoglucosamine mutase (447 aa).

Catalysis depends on Ser-105, which acts as the Phosphoserine intermediate. Mg(2+) contacts are provided by Ser-105, Asp-244, Asp-246, and Asp-248. The residue at position 105 (Ser-105) is a Phosphoserine.

It belongs to the phosphohexose mutase family. Requires Mg(2+) as cofactor. In terms of processing, activated by phosphorylation.

The catalysed reaction is alpha-D-glucosamine 1-phosphate = D-glucosamine 6-phosphate. Functionally, catalyzes the conversion of glucosamine-6-phosphate to glucosamine-1-phosphate. This Polynucleobacter asymbioticus (strain DSM 18221 / CIP 109841 / QLW-P1DMWA-1) (Polynucleobacter necessarius subsp. asymbioticus) protein is Phosphoglucosamine mutase.